The following is a 191-amino-acid chain: Fe/S biogenesis protein NfuA (191 aa).

[4Fe-4S] cluster is bound by residues Cys149 and Cys152.

The protein belongs to the NfuA family. In terms of assembly, homodimer. It depends on [4Fe-4S] cluster as a cofactor.

In terms of biological role, involved in iron-sulfur cluster biogenesis. Binds a 4Fe-4S cluster, can transfer this cluster to apoproteins, and thereby intervenes in the maturation of Fe/S proteins. Could also act as a scaffold/chaperone for damaged Fe/S proteins. The protein is Fe/S biogenesis protein NfuA of Enterobacter sp. (strain 638).